The following is a 149-amino-acid chain: Arginine repressor (149 aa).

The protein belongs to the ArgR family.

Its subcellular location is the cytoplasm. Its pathway is amino-acid biosynthesis; L-arginine biosynthesis [regulation]. In terms of biological role, regulates arginine biosynthesis genes. This Chlorobaculum parvum (strain DSM 263 / NCIMB 8327) (Chlorobium vibrioforme subsp. thiosulfatophilum) protein is Arginine repressor.